We begin with the raw amino-acid sequence, 256 residues long: Ubiquinone/menaquinone biosynthesis C-methyltransferase UbiE (256 aa).

Positions methionine 1 to proline 12 are enriched in basic and acidic residues. A disordered region spans residues methionine 1–proline 22. S-adenosyl-L-methionine is bound by residues threonine 79, aspartate 100, and aspartate 128 to alanine 129.

The protein belongs to the class I-like SAM-binding methyltransferase superfamily. MenG/UbiE family.

The enzyme catalyses a 2-demethylmenaquinol + S-adenosyl-L-methionine = a menaquinol + S-adenosyl-L-homocysteine + H(+). It catalyses the reaction a 2-methoxy-6-(all-trans-polyprenyl)benzene-1,4-diol + S-adenosyl-L-methionine = a 5-methoxy-2-methyl-3-(all-trans-polyprenyl)benzene-1,4-diol + S-adenosyl-L-homocysteine + H(+). The protein operates within quinol/quinone metabolism; menaquinone biosynthesis; menaquinol from 1,4-dihydroxy-2-naphthoate: step 2/2. Its pathway is cofactor biosynthesis; ubiquinone biosynthesis. Functionally, methyltransferase required for the conversion of demethylmenaquinol (DMKH2) to menaquinol (MKH2) and the conversion of 2-polyprenyl-6-methoxy-1,4-benzoquinol (DDMQH2) to 2-polyprenyl-3-methyl-6-methoxy-1,4-benzoquinol (DMQH2). In Pseudomonas putida (Arthrobacter siderocapsulatus), this protein is Ubiquinone/menaquinone biosynthesis C-methyltransferase UbiE.